The primary structure comprises 266 residues: Imidazole glycerol phosphate synthase subunit HisF (266 aa).

Residues Asp-11 and Asp-130 contribute to the active site. The tract at residues Arg-134–Ser-157 is disordered.

It belongs to the HisA/HisF family. Heterodimer of HisH and HisF.

The protein localises to the cytoplasm. The catalysed reaction is 5-[(5-phospho-1-deoxy-D-ribulos-1-ylimino)methylamino]-1-(5-phospho-beta-D-ribosyl)imidazole-4-carboxamide + L-glutamine = D-erythro-1-(imidazol-4-yl)glycerol 3-phosphate + 5-amino-1-(5-phospho-beta-D-ribosyl)imidazole-4-carboxamide + L-glutamate + H(+). Its pathway is amino-acid biosynthesis; L-histidine biosynthesis; L-histidine from 5-phospho-alpha-D-ribose 1-diphosphate: step 5/9. In terms of biological role, IGPS catalyzes the conversion of PRFAR and glutamine to IGP, AICAR and glutamate. The HisF subunit catalyzes the cyclization activity that produces IGP and AICAR from PRFAR using the ammonia provided by the HisH subunit. The sequence is that of Imidazole glycerol phosphate synthase subunit HisF from Paracidovorax citrulli (strain AAC00-1) (Acidovorax citrulli).